The sequence spans 650 residues: Threonine--tRNA ligase (650 aa).

Positions 1–66 constitute a TGS domain; that stretch reads MVQITLPDGS…DQDAKLAIVT (66 aa). A catalytic region spans residues 247–538; the sequence is DHRKIGRDLD…LIENHAGAMP (292 aa). The Zn(2+) site is built by Cys338, His389, and His515.

The protein belongs to the class-II aminoacyl-tRNA synthetase family. In terms of assembly, homodimer. Zn(2+) is required as a cofactor.

The protein localises to the cytoplasm. The catalysed reaction is tRNA(Thr) + L-threonine + ATP = L-threonyl-tRNA(Thr) + AMP + diphosphate + H(+). Catalyzes the attachment of threonine to tRNA(Thr) in a two-step reaction: L-threonine is first activated by ATP to form Thr-AMP and then transferred to the acceptor end of tRNA(Thr). Also edits incorrectly charged L-seryl-tRNA(Thr). This is Threonine--tRNA ligase from Bordetella avium (strain 197N).